We begin with the raw amino-acid sequence, 149 residues long: SsrA-binding protein (149 aa).

This sequence belongs to the SmpB family.

It localises to the cytoplasm. Required for rescue of stalled ribosomes mediated by trans-translation. Binds to transfer-messenger RNA (tmRNA), required for stable association of tmRNA with ribosomes. tmRNA and SmpB together mimic tRNA shape, replacing the anticodon stem-loop with SmpB. tmRNA is encoded by the ssrA gene; the 2 termini fold to resemble tRNA(Ala) and it encodes a 'tag peptide', a short internal open reading frame. During trans-translation Ala-aminoacylated tmRNA acts like a tRNA, entering the A-site of stalled ribosomes, displacing the stalled mRNA. The ribosome then switches to translate the ORF on the tmRNA; the nascent peptide is terminated with the 'tag peptide' encoded by the tmRNA and targeted for degradation. The ribosome is freed to recommence translation, which seems to be the essential function of trans-translation. This is SsrA-binding protein from Carboxydothermus hydrogenoformans (strain ATCC BAA-161 / DSM 6008 / Z-2901).